The primary structure comprises 218 residues: uncharacterized protein (218 aa).

Transmembrane regions (helical) follow at residues 14–34 and 175–195; these read CLLS…YFTS and LIIP…LALV.

It to H.pylori HP0270.

The protein resides in the cell membrane. This is an uncharacterized protein from Rickettsia prowazekii (strain Madrid E).